A 117-amino-acid polypeptide reads, in one-letter code: Ribosome-binding factor A (117 aa).

Belongs to the RbfA family. In terms of assembly, monomer. Binds 30S ribosomal subunits, but not 50S ribosomal subunits or 70S ribosomes.

The protein resides in the cytoplasm. Its function is as follows. One of several proteins that assist in the late maturation steps of the functional core of the 30S ribosomal subunit. Associates with free 30S ribosomal subunits (but not with 30S subunits that are part of 70S ribosomes or polysomes). Required for efficient processing of 16S rRNA. May interact with the 5'-terminal helix region of 16S rRNA. The chain is Ribosome-binding factor A from Streptococcus suis (strain 98HAH33).